Reading from the N-terminus, the 524-residue chain is PiggyBac transposable element-derived protein 5 (524 aa).

The disordered stretch occupies residues 30-117 (DDVFGESGPD…DTGGPTRKMP (88 aa)). Residues 47-59 (STSAASRSSSAAS) are compositionally biased toward low complexity. Positions 67–79 (PGPPGAAPPPPRA) are enriched in pro residues. Residues 98 to 108 (LRDRPPPRFED) show a composition bias toward basic and acidic residues. Ser-521 is subject to Phosphoserine.

It localises to the nucleus. In terms of biological role, transposase that mediates sequence-specific genomic rearrangements. Can induce genomic rearrangements that inactivate the HPRT1 gene. This chain is PiggyBac transposable element-derived protein 5 (PGBD5), found in Homo sapiens (Human).